Consider the following 896-residue polypeptide: Alanine--tRNA ligase (896 aa).

Basic and acidic residues predominate over residues 439–456; it reads QRAKDDAKAKKGQHRDAS. The disordered stretch occupies residues 439–459; that stretch reads QRAKDDAKAKKGQHRDASAYR. Positions 579, 583, 681, and 685 each coordinate Zn(2+).

It belongs to the class-II aminoacyl-tRNA synthetase family. It depends on Zn(2+) as a cofactor.

The protein localises to the cytoplasm. It carries out the reaction tRNA(Ala) + L-alanine + ATP = L-alanyl-tRNA(Ala) + AMP + diphosphate. Functionally, catalyzes the attachment of alanine to tRNA(Ala) in a two-step reaction: alanine is first activated by ATP to form Ala-AMP and then transferred to the acceptor end of tRNA(Ala). Also edits incorrectly charged Ser-tRNA(Ala) and Gly-tRNA(Ala) via its editing domain. The protein is Alanine--tRNA ligase of Nocardioides sp. (strain ATCC BAA-499 / JS614).